A 419-amino-acid chain; its full sequence is DNA primase DnaG (419 aa).

The Toprim domain occupies 174 to 260 (DAIIVVEGRS…EVEDLEKDEV (87 aa)). Mg(2+)-binding residues include E180, D222, and D224. Positions 277–314 (HNILSESDSKNSHKKHNGKHNNKHSNNKHQQHETKVKE) are disordered. Over residues 288–305 (SHKKHNGKHNNKHSNNKH) the composition is skewed to basic residues.

Belongs to the archaeal DnaG primase family. As to quaternary structure, forms a ternary complex with MCM helicase and DNA. Component of the archaeal exosome complex. The cofactor is Mg(2+).

It catalyses the reaction ssDNA + n NTP = ssDNA/pppN(pN)n-1 hybrid + (n-1) diphosphate.. Functionally, RNA polymerase that catalyzes the synthesis of short RNA molecules used as primers for DNA polymerase during DNA replication. Also part of the exosome, which is a complex involved in RNA degradation. Acts as a poly(A)-binding protein that enhances the interaction between heteromeric, adenine-rich transcripts and the exosome. This Methanobrevibacter smithii (strain ATCC 35061 / DSM 861 / OCM 144 / PS) protein is DNA primase DnaG.